Consider the following 487-residue polypeptide: Dihydrofolate synthase/folylpolyglutamate synthase (487 aa).

44–46 (DPS) is a 7,8-dihydropteroate binding site. Residue 74–77 (GKTS) participates in ATP binding. T76 and S98 together coordinate Mg(2+). 150-153 (SKFE) is a 7,8-dihydropteroate binding site. E174 contributes to the Mg(2+) binding site. Residue 181 to 183 (WDA) participates in 7,8-dihydropteroate binding. H201 and D203 together coordinate Mg(2+). ATP contacts are provided by residues N301, R338, and 351-354 (DAAH). Mg(2+) is bound at residue D384.

Belongs to the folylpolyglutamate synthase family. As to quaternary structure, monomer. Requires Mg(2+) as cofactor.

It carries out the reaction 7,8-dihydropteroate + L-glutamate + ATP = 7,8-dihydrofolate + ADP + phosphate + H(+). The enzyme catalyses (6S)-5,6,7,8-tetrahydrofolyl-(gamma-L-Glu)(n) + L-glutamate + ATP = (6S)-5,6,7,8-tetrahydrofolyl-(gamma-L-Glu)(n+1) + ADP + phosphate + H(+). Its pathway is cofactor biosynthesis; tetrahydrofolate biosynthesis; 7,8-dihydrofolate from 2-amino-4-hydroxy-6-hydroxymethyl-7,8-dihydropteridine diphosphate and 4-aminobenzoate: step 2/2. The protein operates within cofactor biosynthesis; tetrahydrofolylpolyglutamate biosynthesis. In terms of biological role, catalyzes the addition of a glutamate residue to dihydropteroate (7,8-dihydropteroate or H2Pte) to form dihydrofolate (7,8-dihydrofolate monoglutamate or H2Pte-Glu). Also catalyzes successive additions of L-glutamate to tetrahydrofolate, leading to folylpolyglutamate derivatives. Functionally, is involved in the bioactivation of the antituberculous drug para-aminosalicylic acid (PAS). Is able to use hydroxy-dihydropteroate (H2PtePAS) as substrate, which is the product formed by the action of DHPS (FolP1) on PAS, leading to hydroxy-dihydrofolate (H2PtePAS-Glu). This compound inhibits dihydrofolate reductase DHFR (DfrA), the next enzyme in the folate pathway, and thus disrupts the folate-dependent metabolic pathways. In Mycobacterium tuberculosis (strain ATCC 25618 / H37Rv), this protein is Dihydrofolate synthase/folylpolyglutamate synthase.